The sequence spans 394 residues: Phosphoglycerate kinase (394 aa).

Residues 21 to 23 (DFN), R36, 59 to 62 (HLGR), R118, and R151 each bind substrate. Residue S183 is modified to Phosphoserine. K201 and G292 together coordinate ATP. A Phosphothreonine modification is found at T299. ATP contacts are provided by residues E323 and 350–353 (GGDS).

This sequence belongs to the phosphoglycerate kinase family. Monomer.

It is found in the cytoplasm. It catalyses the reaction (2R)-3-phosphoglycerate + ATP = (2R)-3-phospho-glyceroyl phosphate + ADP. It functions in the pathway carbohydrate degradation; glycolysis; pyruvate from D-glyceraldehyde 3-phosphate: step 2/5. This is Phosphoglycerate kinase from Anoxybacillus flavithermus (strain DSM 21510 / WK1).